The following is a 528-amino-acid chain: Glutamyl-tRNA(Gln) amidotransferase subunit B, mitochondrial (528 aa).

Residues 1–21 (MSWRLSFRTNLLIYNVRRRNY) constitute a mitochondrion transit peptide.

Belongs to the GatB/GatE family. GatB subfamily. In terms of assembly, subunit of the heterotrimeric GatCAB amidotransferase (AdT) complex, composed of A, B and C subunits.

It localises to the mitochondrion. The catalysed reaction is L-glutamyl-tRNA(Gln) + L-glutamine + ATP + H2O = L-glutaminyl-tRNA(Gln) + L-glutamate + ADP + phosphate + H(+). Its function is as follows. Allows the formation of correctly charged Gln-tRNA(Gln) through the transamidation of misacylated Glu-tRNA(Gln) in the mitochondria. The reaction takes place in the presence of glutamine and ATP through an activated gamma-phospho-Glu-tRNA(Gln). This chain is Glutamyl-tRNA(Gln) amidotransferase subunit B, mitochondrial, found in Aedes aegypti (Yellowfever mosquito).